Consider the following 396-residue polypeptide: CCA-adding enzyme (396 aa).

Residues Gly-32 and Arg-35 each coordinate ATP. Residues Gly-32 and Arg-35 each contribute to the CTP site. Mg(2+) is bound by residues Asp-45 and Asp-47. ATP is bound by residues Arg-116, Asp-159, Arg-162, Arg-165, and Arg-168. CTP contacts are provided by Arg-116, Asp-159, Arg-162, Arg-165, and Arg-168.

The protein belongs to the tRNA nucleotidyltransferase/poly(A) polymerase family. Bacterial CCA-adding enzyme type 3 subfamily. Homodimer. Requires Mg(2+) as cofactor.

It catalyses the reaction a tRNA precursor + 2 CTP + ATP = a tRNA with a 3' CCA end + 3 diphosphate. The enzyme catalyses a tRNA with a 3' CCA end + 2 CTP + ATP = a tRNA with a 3' CCACCA end + 3 diphosphate. In terms of biological role, catalyzes the addition and repair of the essential 3'-terminal CCA sequence in tRNAs without using a nucleic acid template. Adds these three nucleotides in the order of C, C, and A to the tRNA nucleotide-73, using CTP and ATP as substrates and producing inorganic pyrophosphate. tRNA 3'-terminal CCA addition is required both for tRNA processing and repair. Also involved in tRNA surveillance by mediating tandem CCA addition to generate a CCACCA at the 3' terminus of unstable tRNAs. While stable tRNAs receive only 3'-terminal CCA, unstable tRNAs are marked with CCACCA and rapidly degraded. This is CCA-adding enzyme from Lactobacillus delbrueckii subsp. bulgaricus (strain ATCC BAA-365 / Lb-18).